Reading from the N-terminus, the 403-residue chain is RNA-binding motif, single-stranded-interacting protein 1 (403 aa).

Positions 30–56 (PAHPMAPPSPSTTSSNNNSSSSSNSGW) are disordered. Residues 40–54 (STTSSNNNSSSSSNS) are compositionally biased toward low complexity. RRM domains follow at residues 62 to 135 (TNLY…MAKQ) and 141 to 226 (TNLY…FADG). Thr-208 carries the post-translational modification Phosphothreonine. The segment covering 382–395 (GQQQVAVETSNDHS) has biased composition (polar residues). The segment at 382–403 (GQQQVAVETSNDHSPYTFPPNK) is disordered.

As to expression, ubiquitous. Expressed in all tissues except testis.

The protein localises to the nucleus. Single-stranded DNA binding protein that interacts with the region upstream of the MYC gene. Binds specifically to the DNA sequence motif 5'-[AT]CT[AT][AT]T-3'. Probably has a role in DNA replication. The sequence is that of RNA-binding motif, single-stranded-interacting protein 1 (Rbms1) from Mus musculus (Mouse).